We begin with the raw amino-acid sequence, 142 residues long: Hemoglobin subunit alpha-1 (142 aa).

Positions 2 to 142 constitute a Globin domain; that stretch reads LLSADDKKHI…VSTVLTSKYR (141 aa). His59 contacts O2. His88 lines the heme b pocket.

This sequence belongs to the globin family. In terms of assembly, heterotetramer of two alpha chains and two beta chains. Red blood cells.

Involved in oxygen transport from the lung to the various peripheral tissues. The sequence is that of Hemoglobin subunit alpha-1 (hba1) from Xenopus laevis (African clawed frog).